A 128-amino-acid chain; its full sequence is Fluoride-specific ion channel FluC (128 aa).

4 helical membrane passes run 2-22 (FYSI…RWCL), 35-55 (LGTL…AVVF), 67-87 (LFVI…SVEV), and 96-116 (FGWA…LTAL). Residues G75 and T78 each contribute to the Na(+) site.

This sequence belongs to the fluoride channel Fluc/FEX (TC 1.A.43) family.

It is found in the cell inner membrane. It catalyses the reaction fluoride(in) = fluoride(out). With respect to regulation, na(+) is not transported, but it plays an essential structural role and its presence is essential for fluoride channel function. Its function is as follows. Fluoride-specific ion channel. Important for reducing fluoride concentration in the cell, thus reducing its toxicity. The sequence is that of Fluoride-specific ion channel FluC from Burkholderia cenocepacia (strain ATCC BAA-245 / DSM 16553 / LMG 16656 / NCTC 13227 / J2315 / CF5610) (Burkholderia cepacia (strain J2315)).